Here is a 206-residue protein sequence, read N- to C-terminus: MRLLPLLRTVLWAALLGSRLPGCSSLRHPIYWNSSNPRLLRGDAVVELGFNDYLDIFCPHYESPGPPEGPETFALYMVDWSGYEACTAEGANAFQRWNCSMPFAPFSPVRFSEKIQRYTPFPLGFEFLPGETYYYISVPTPESPGRCLRLQVSVCCKESGSSHESAHPVGSPGESGTSGWRGGHAPSPLCLLLLLLLPILRLLRVL.

Positions 1 to 25 (MRLLPLLRTVLWAALLGSRLPGCSS) are cleaved as a signal peptide. The Ephrin RBD domain maps to 26-158 (LRHPIYWNSS…RLQVSVCCKE (133 aa)). Asn-33 carries an N-linked (GlcNAc...) asparagine glycan. Residues 41–43 (RGD) carry the Cell attachment site motif. 2 cysteine pairs are disulfide-bonded: Cys-58–Cys-99 and Cys-86–Cys-147. Asn-98 carries N-linked (GlcNAc...) asparagine glycosylation. A disordered region spans residues 161 to 180 (SSHESAHPVGSPGESGTSGW). Ser-175 carries GPI-anchor amidated serine lipidation. Residues 176-206 (GTSGWRGGHAPSPLCLLLLLLLPILRLLRVL) constitute a propeptide, removed in mature form.

This sequence belongs to the ephrin family. Expressed in myogenic progenitor cells.

It localises to the cell membrane. Its function is as follows. Cell surface GPI-bound ligand for Eph receptors, a family of receptor tyrosine kinases which are crucial for migration, repulsion and adhesion during neuronal, vascular and epithelial development. Binds promiscuously Eph receptors residing on adjacent cells, leading to contact-dependent bidirectional signaling into neighboring cells. May play a role in the interaction between activated B-lymphocytes and dendritic cells in tonsils. The sequence is that of Ephrin-A4 (Efna4) from Mus musculus (Mouse).